A 507-amino-acid chain; its full sequence is Arabinose import ATP-binding protein AraG (507 aa).

2 consecutive ABC transporter domains span residues 8–243 (LSFH…MVGR) and 255–499 (PHGE…MLRI). 40-47 (GENGAGKS) lines the ATP pocket.

This sequence belongs to the ABC transporter superfamily. Arabinose importer (TC 3.A.1.2.2) family. The complex is composed of two ATP-binding proteins (AraG), two transmembrane proteins (AraH) and a solute-binding protein (AraF).

The protein resides in the cell inner membrane. The catalysed reaction is L-arabinose(out) + ATP + H2O = L-arabinose(in) + ADP + phosphate + H(+). Its function is as follows. Part of the ABC transporter complex AraFGH involved in arabinose import. Responsible for energy coupling to the transport system. The protein is Arabinose import ATP-binding protein AraG of Pectobacterium atrosepticum (strain SCRI 1043 / ATCC BAA-672) (Erwinia carotovora subsp. atroseptica).